Here is a 294-residue protein sequence, read N- to C-terminus: Probable enoyl-CoA hydratase 2 (294 aa).

Residues 84–85, lysine 113, 190–195, glycine 213, and phenylalanine 243 each bind (3R)-3-hydroxydecanoyl-CoA; these read HG and DLNPLH. Positions 165 to 269 constitute a MaoC-like domain; the sequence is DRAPDAISKQ…INPTTILFQS (105 aa). The Microbody targeting signal motif lies at 292–294; the sequence is GSL.

The protein belongs to the short-chain dehydrogenases/reductases (SDR) family.

Its subcellular location is the peroxisome. The catalysed reaction is a (3R)-3-hydroxyacyl-CoA = a (2E)-enoyl-CoA + H2O. This is Probable enoyl-CoA hydratase 2 (mfeB) from Dictyostelium discoideum (Social amoeba).